Consider the following 212-residue polypeptide: Orotate phosphoribosyltransferase (212 aa).

Residues Arg97, Lys101, His103, and 123-131 (EDLISTGGS) each bind 5-phospho-alpha-D-ribose 1-diphosphate. Ser127 is a binding site for orotate.

This sequence belongs to the purine/pyrimidine phosphoribosyltransferase family. PyrE subfamily. In terms of assembly, homodimer. The cofactor is Mg(2+).

The catalysed reaction is orotidine 5'-phosphate + diphosphate = orotate + 5-phospho-alpha-D-ribose 1-diphosphate. Its pathway is pyrimidine metabolism; UMP biosynthesis via de novo pathway; UMP from orotate: step 1/2. Catalyzes the transfer of a ribosyl phosphate group from 5-phosphoribose 1-diphosphate to orotate, leading to the formation of orotidine monophosphate (OMP). In Bacteroides fragilis (strain ATCC 25285 / DSM 2151 / CCUG 4856 / JCM 11019 / LMG 10263 / NCTC 9343 / Onslow / VPI 2553 / EN-2), this protein is Orotate phosphoribosyltransferase.